The chain runs to 693 residues: Lamina-associated polypeptide 2, isoforms alpha/zeta (693 aa).

The LEM-like domain maps to 5-48 (LEDPSVLTKDKLKSELVANNVTLPAGEQRKDVYVQLYLQHLTAR). 3 disordered regions span residues 48–113 (RNRP…DVTE), 148–211 (LREQ…LAST), and 227–270 (TRPP…KLAP). Residues 49–107 (NRPPLAAGANSKGPPDFSSDEEREPTPVLGSGASVGRGRGAVGRKATKKTDKPRLEDKD) are linker. Ser-59, Ser-66, and Ser-67 each carry phosphoserine. Thr-74 bears the Phosphothreonine mark. 2 positions are modified to phosphoserine: Ser-79 and Ser-82. Residues Arg-85 and Arg-87 each carry the omega-N-methylarginine modification. Residues 96–105 (KKTDKPRLED) are compositionally biased toward basic and acidic residues. In terms of domain architecture, LEM spans 108-152 (DLDVTELSNEELLDQLVRYGVNPGPIVGTTRKLYEKKLLKLREQG). Thr-153 carries the post-translational modification Phosphothreonine. A compositionally biased stretch (polar residues) spans 154 to 177 (ESRSSTPLPTVSSSAENTRQNGSN). Ser-155 and Ser-158 each carry phosphoserine. A phosphothreonine mark is found at Thr-159 and Thr-163. A phosphoserine mark is found at Ser-165 and Ser-167. The span at 178–190 (DSDRYSDNDEGKK) shows a compositional bias: basic and acidic residues. Positions 190–196 (KKEHKKV) match the Nuclear localization signal motif. The residue at position 206 (Ser-206) is an N6-acetyllysine. The segment covering 245-254 (TKRDPPRETC) has biased composition (basic and acidic residues). Ser-310 carries the post-translational modification Phosphoserine. Position 329 is an omega-N-methylarginine (Arg-329). A disordered region spans residues 332–351 (KSRAQPLRAEEPGVSDQSVF). Phosphoserine occurs at positions 349, 352, 368, 420, and 422. The span at 412-422 (QSSYQDSESLS) shows a compositional bias: low complexity. Positions 412–442 (QSSYQDSESLSPPRKVPRLSEKPARGGDSGS) are disordered. A coiled-coil region spans residues 557 to 656 (TESCDKHLDL…MGRRYLWLKD (100 aa)). Lys-655 bears the N6-acetyllysine mark.

It belongs to the LEM family. Homooligomer. Interacts with LMNA, BANF1 and RB1 and with chromosomes. Associates directly or indirectly with lamins at specific cell-cycle stages. Interacts with CMTM6. In terms of processing, phosphorylated in a mitose-specific manner.

The protein localises to the nucleus. Its subcellular location is the chromosome. Functionally, may be involved in the structural organization of the nucleus and in the post-mitotic nuclear assembly. Plays an important role, together with LMNA, in the nuclear anchorage of RB1. The sequence is that of Lamina-associated polypeptide 2, isoforms alpha/zeta (Tmpo) from Mus musculus (Mouse).